Consider the following 1366-residue polypeptide: Agglutinin-like protein 6 (1366 aa).

Residues 1–18 form the signal peptide; it reads MKTVILLHLFFYCTIAMA. Intrachain disulfides connect cysteine 74/cysteine 151, cysteine 97/cysteine 113, cysteine 206/cysteine 301, and cysteine 228/cysteine 257. N-linked (GlcNAc...) asparagine glycosylation occurs at asparagine 294. ALS repeat units follow at residues 368-399, 404-435, 441-472, 477-508, 513-544, and 549-580; these read TTIT…VDVP, TTIT…VQVP, VTTT…IKEP, VTTT…VREP, and VTTT…IHDP. Residues 449-470 form a disordered region; sequence GSVPTTETVTTGPQGTDSVIIK. Over residues 451–464 the composition is skewed to low complexity; sequence VPTTETVTTGPQGT. 3 disordered regions span residues 583 to 658, 758 to 780, and 804 to 833; these read ESSS…TSES, LSSD…FPHT, and VSLT…SDQS. N-linked (GlcNAc...) asparagine glycosylation is present at asparagine 596. Low complexity-rich tracts occupy residues 758 to 775 and 805 to 833; these read LSSD…SPSD and SLTS…SDQS. The N-linked (GlcNAc...) asparagine glycan is linked to asparagine 866. Disordered stretches follow at residues 874–915, 928–976, 996–1040, 1081–1130, and 1158–1218; these read ESES…STVT, TGMP…TSAS, SETS…KESS, EDNE…VSSV, and ETSL…STNN. Low complexity-rich tracts occupy residues 875–889, 898–915, and 940–958; these read SESS…ASES, SEST…STVT, and TSDV…PTSA. Over residues 959 to 969 the composition is skewed to polar residues; that stretch reads EQSITDNPNID. Residues 996-1021 show a composition bias toward low complexity; sequence SETSTLSSDDSTSSDTSISSTTNSDT. Polar residues-rich tracts occupy residues 1022–1040 and 1085–1107; these read GNIN…KESS and PNTF…SVLS. 2 stretches are compositionally biased toward low complexity: residues 1121–1130 and 1158–1177; these read VTDTTTVSSV and ETSL…SSGT. 2 stretches are compositionally biased toward polar residues: residues 1192 to 1202 and 1209 to 1218; these read TSTDNRLSYST and TYANSGSTNN. The N-linked (GlcNAc...) asparagine glycan is linked to asparagine 1273. Serine 1345 carries the GPI-anchor amidated serine lipid modification. Positions 1346–1366 are cleaved as a propeptide — removed in mature form; that stretch reads SATKHPSWLLKFISVALFFFL.

The protein belongs to the ALS family. In terms of processing, the GPI-anchor is attached to the protein in the endoplasmic reticulum and serves to target the protein to the cell surface. There, the glucosamine-inositol phospholipid moiety is cleaved off and the GPI-modified mannoprotein is covalently attached via its lipidless GPI glycan remnant to the 1,6-beta-glucan of the outer cell wall layer.

It is found in the cell membrane. It localises to the secreted. The protein resides in the cell wall. Its function is as follows. Cell surface adhesion protein which mediates both yeast-to-host tissue adherence and yeast aggregation. Plays an important role in the pathogenesis of C.albicans infections. The chain is Agglutinin-like protein 6 (ALS6) from Candida albicans (strain SC5314 / ATCC MYA-2876) (Yeast).